We begin with the raw amino-acid sequence, 535 residues long: Lecithin-cholesterol acyltransferase-like 4 (535 aa).

S2 carries the post-translational modification N-acetylserine. S182 serves as the catalytic Acyl-ester intermediate. Active-site charge relay system residues include D391 and H416. Residues 488–505 are compositionally biased toward polar residues; it reads STVNSISVSQPGDDQNPQ. The disordered stretch occupies residues 488–507; the sequence is STVNSISVSQPGDDQNPQAE.

Belongs to the AB hydrolase superfamily. Lipase family.

The polypeptide is Lecithin-cholesterol acyltransferase-like 4 (LCAT4) (Arabidopsis thaliana (Mouse-ear cress)).